A 364-amino-acid polypeptide reads, in one-letter code: Aminomethyltransferase (364 aa).

This sequence belongs to the GcvT family. The glycine cleavage system is composed of four proteins: P, T, L and H.

The enzyme catalyses N(6)-[(R)-S(8)-aminomethyldihydrolipoyl]-L-lysyl-[protein] + (6S)-5,6,7,8-tetrahydrofolate = N(6)-[(R)-dihydrolipoyl]-L-lysyl-[protein] + (6R)-5,10-methylene-5,6,7,8-tetrahydrofolate + NH4(+). Functionally, the glycine cleavage system catalyzes the degradation of glycine. The polypeptide is Aminomethyltransferase (Anoxybacillus flavithermus (strain DSM 21510 / WK1)).